The following is a 173-amino-acid chain: MKLNEIRDNQGARKSRVRVGRGIGSGLGKTGGRGQKGQKSRSGVSINGFEGGQMPLHMRLPKRGFNNIFAKDYAEVNLGAIQKLVDAKKLDTAGVIDHAALKAAGVARGGKDGVRILGKGELTAKVSFKVAGVSAGAKAAIEKAGGSVEVIEVVPAAEKAAAKKGTAKAAKKA.

Basic and acidic residues predominate over residues 1-11 (MKLNEIRDNQG). A disordered region spans residues 1–50 (MKLNEIRDNQGARKSRVRVGRGIGSGLGKTGGRGQKGQKSRSGVSINGFE). Over residues 21–35 (RGIGSGLGKTGGRGQ) the composition is skewed to gly residues.

This sequence belongs to the universal ribosomal protein uL15 family. As to quaternary structure, part of the 50S ribosomal subunit.

Its function is as follows. Binds to the 23S rRNA. The chain is Large ribosomal subunit protein uL15 from Rhizorhabdus wittichii (strain DSM 6014 / CCUG 31198 / JCM 15750 / NBRC 105917 / EY 4224 / RW1) (Sphingomonas wittichii).